Consider the following 455-residue polypeptide: ATP-dependent protease ATPase subunit HslU (455 aa).

Residues V23, 65–70, D266, E333, and R405 each bind ATP; that span reads GVGKTE.

It belongs to the ClpX chaperone family. HslU subfamily. In terms of assembly, a double ring-shaped homohexamer of HslV is capped on each side by a ring-shaped HslU homohexamer. The assembly of the HslU/HslV complex is dependent on binding of ATP.

The protein resides in the cytoplasm. ATPase subunit of a proteasome-like degradation complex; this subunit has chaperone activity. The binding of ATP and its subsequent hydrolysis by HslU are essential for unfolding of protein substrates subsequently hydrolyzed by HslV. HslU recognizes the N-terminal part of its protein substrates and unfolds these before they are guided to HslV for hydrolysis. This chain is ATP-dependent protease ATPase subunit HslU, found in Xanthomonas euvesicatoria pv. vesicatoria (strain 85-10) (Xanthomonas campestris pv. vesicatoria).